The chain runs to 241 residues: MFAQQPRSAPAPFYEKVKQAISEKIHSGVWRPHDRIPSEAELVAQFGFSRMTINRALRELTDEGLLVRLQGVGTFVAEPKGQSALFEVRSIAAEIVARHHQHRCEVLLLEETRADHIQATALSVPEGTRIFHSLMVHYENEVPVQIEDRCVNAAVVPDYLHQDYTATTPHDYLSLIAPLTEGEHIVEAVQATAEECALLHIHAHDPCLLIRRRTWSTTHIVSHARLLFPGSRYRLQGRFGS.

One can recognise an HTH gntR-type domain in the interval 11–79 (APFYEKVKQA…QGVGTFVAEP (69 aa)). Positions 39 to 58 (EAELVAQFGFSRMTINRALR) form a DNA-binding region, H-T-H motif.

The protein operates within amino-acid degradation; L-histidine degradation into L-glutamate [regulation]. Its function is as follows. Repressor which binds to the hutP region in the histidine utilization (hut) operon. It blocks the expression of all the hut genes in the absence of inducer. This Klebsiella aerogenes (Enterobacter aerogenes) protein is Histidine utilization repressor (hutC).